A 384-amino-acid polypeptide reads, in one-letter code: MTEGVGLPLWLLAELTYRCLLQCPYCSNPLDYAQHKNELTTQEWFDVFDQARQMGAVQLGFSGGEPLVRQDLEQLVAHAHQLGFYTNLVTSGMGLTEQRISHLKQAGLDHIQISFQASDPVLNDALAGSKHAFEQKYEMCRLVKKYDYPMVLNFVIHRHNIDQIDKIIELCLELNADTVELAICQFYGWAFLNRQGLLPTQEQLIRAERITNEYREKLKAQNHPCKLIFVVPDYYEERPKACMNGWGKIFFTVAPDGMALPCHAARQLPISFPNVREQSLSRIWYESTGFNRFRGDAWMPEGCRSCPDKDRDFGGCRCQAYMLTGDASNADPVCGKSPYHQFIEQARAESEIDSSLEKLVFRNSRNSKQFTVQQNIPVQNIVDD.

Residues 5-220 (VGLPLWLLAE…TNEYREKLKA (216 aa)) enclose the Radical SAM core domain. [4Fe-4S] cluster is bound by residues Cys-19, Cys-23, and Cys-26.

This sequence belongs to the radical SAM superfamily. PqqE family. In terms of assembly, interacts with PqqD. The interaction is necessary for activity of PqqE. [4Fe-4S] cluster is required as a cofactor.

The enzyme catalyses [PQQ precursor protein] + S-adenosyl-L-methionine = E-Y cross-linked-[PQQ precursor protein] + 5'-deoxyadenosine + L-methionine + H(+). It participates in cofactor biosynthesis; pyrroloquinoline quinone biosynthesis. Catalyzes the cross-linking of a glutamate residue and a tyrosine residue in the PqqA protein as part of the biosynthesis of pyrroloquinoline quinone (PQQ). This Acinetobacter baumannii (strain SDF) protein is PqqA peptide cyclase.